Consider the following 544-residue polypeptide: Protein anon-37Cs (544 aa).

The protein localises to the cytoplasm. Functionally, has a non-vital function. The protein is Protein anon-37Cs (anon-37Cs) of Drosophila lebanonensis (Fruit fly).